The chain runs to 311 residues: Aspartate carbamoyltransferase catalytic subunit (311 aa).

Carbamoyl phosphate is bound by residues R59 and T60. K87 lines the L-aspartate pocket. Carbamoyl phosphate-binding residues include R109, H139, and Q142. L-aspartate is bound by residues R172 and R224. 2 residues coordinate carbamoyl phosphate: A265 and P266.

This sequence belongs to the aspartate/ornithine carbamoyltransferase superfamily. ATCase family. As to quaternary structure, heterododecamer (2C3:3R2) of six catalytic PyrB chains organized as two trimers (C3), and six regulatory PyrI chains organized as three dimers (R2).

The enzyme catalyses carbamoyl phosphate + L-aspartate = N-carbamoyl-L-aspartate + phosphate + H(+). It functions in the pathway pyrimidine metabolism; UMP biosynthesis via de novo pathway; (S)-dihydroorotate from bicarbonate: step 2/3. In terms of biological role, catalyzes the condensation of carbamoyl phosphate and aspartate to form carbamoyl aspartate and inorganic phosphate, the committed step in the de novo pyrimidine nucleotide biosynthesis pathway. This Streptococcus pyogenes serotype M12 (strain MGAS2096) protein is Aspartate carbamoyltransferase catalytic subunit.